Reading from the N-terminus, the 315-residue chain is Porphobilinogen deaminase (315 aa).

Residue Cys-245 is modified to S-(dipyrrolylmethanemethyl)cysteine.

It belongs to the HMBS family. As to quaternary structure, monomer. Dipyrromethane is required as a cofactor.

The enzyme catalyses 4 porphobilinogen + H2O = hydroxymethylbilane + 4 NH4(+). It functions in the pathway porphyrin-containing compound metabolism; protoporphyrin-IX biosynthesis; coproporphyrinogen-III from 5-aminolevulinate: step 2/4. The protein operates within porphyrin-containing compound metabolism; chlorophyll biosynthesis. In terms of biological role, tetrapolymerization of the monopyrrole PBG into the hydroxymethylbilane pre-uroporphyrinogen in several discrete steps. This Prochlorococcus marinus (strain NATL1A) protein is Porphobilinogen deaminase.